Reading from the N-terminus, the 873-residue chain is Bifunctional uridylyltransferase/uridylyl-removing enzyme (873 aa).

The tract at residues 1–332 (MAFQSPLTFN…NGGETEPAVI (332 aa)) is uridylyltransferase. The interval 333 to 692 (INEDFQRRGR…MSKKATRGGT (360 aa)) is uridylyl-removing. In terms of domain architecture, HD spans 451–573 (VDEHSVRLLN…VRDEERLEYL (123 aa)). ACT domains follow at residues 693–773 (EVFV…VKTR) and 800–873 (LMEL…ELAP).

Belongs to the GlnD family. Mg(2+) serves as cofactor.

It carries out the reaction [protein-PII]-L-tyrosine + UTP = [protein-PII]-uridylyl-L-tyrosine + diphosphate. The catalysed reaction is [protein-PII]-uridylyl-L-tyrosine + H2O = [protein-PII]-L-tyrosine + UMP + H(+). Uridylyltransferase (UTase) activity is inhibited by glutamine, while glutamine activates uridylyl-removing (UR) activity. Modifies, by uridylylation and deuridylylation, the PII regulatory proteins (GlnB and homologs), in response to the nitrogen status of the cell that GlnD senses through the glutamine level. Under low glutamine levels, catalyzes the conversion of the PII proteins and UTP to PII-UMP and PPi, while under higher glutamine levels, GlnD hydrolyzes PII-UMP to PII and UMP (deuridylylation). Thus, controls uridylylation state and activity of the PII proteins, and plays an important role in the regulation of nitrogen assimilation and metabolism. In Vibrio vulnificus (strain CMCP6), this protein is Bifunctional uridylyltransferase/uridylyl-removing enzyme.